A 194-amino-acid polypeptide reads, in one-letter code: Adenylate kinase isoenzyme 1 (194 aa).

N-acetylmethionine is present on methionine 1. An ATP-binding site is contributed by glycine 18 to threonine 23. The residue at position 38 (serine 38) is a Phosphoserine. Residues serine 38–valine 67 are NMP. Residues threonine 39, arginine 44, glutamine 65 to valine 67, glycine 94 to arginine 97, and glutamine 101 each bind AMP. The interval lysine 131–aspartate 141 is LID. An ATP-binding site is contributed by arginine 132. 2 residues coordinate AMP: arginine 138 and arginine 149. Residue glycine 177 coordinates ATP.

The protein belongs to the adenylate kinase family. AK1 subfamily. In terms of assembly, monomer. Mg(2+) serves as cofactor.

It localises to the cytoplasm. It carries out the reaction a ribonucleoside 5'-phosphate + ATP = a ribonucleoside 5'-diphosphate + ADP. It catalyses the reaction AMP + ATP = 2 ADP. The catalysed reaction is dAMP + ATP = dADP + ADP. The enzyme catalyses dATP + AMP = dADP + ADP. It carries out the reaction dAMP + dATP = 2 dADP. It catalyses the reaction a 2'-deoxyribonucleoside 5'-diphosphate + ATP = a 2'-deoxyribonucleoside 5'-triphosphate + ADP. The catalysed reaction is a ribonucleoside 5'-diphosphate + ATP = a ribonucleoside 5'-triphosphate + ADP. The enzyme catalyses CDP + GTP = CTP + GDP. It carries out the reaction GDP + ATP = GTP + ADP. It catalyses the reaction UDP + ATP = UTP + ADP. The catalysed reaction is GTP + UDP = UTP + GDP. The enzyme catalyses dTDP + GTP = dTTP + GDP. It carries out the reaction dCDP + GTP = dCTP + GDP. It catalyses the reaction dGDP + ATP = dGTP + ADP. The catalysed reaction is dADP + GTP = dATP + GDP. The enzyme catalyses thiamine diphosphate + ADP = thiamine triphosphate + AMP. In terms of biological role, catalyzes the reversible transfer of the terminal phosphate group between ATP and AMP. Also displays broad nucleoside diphosphate kinase activity. Plays an important role in cellular energy homeostasis and in adenine nucleotide metabolism. Also catalyzes at a very low rate the synthesis of thiamine triphosphate (ThTP) from thiamine diphosphate (ThDP) and ADP. This Homo sapiens (Human) protein is Adenylate kinase isoenzyme 1.